The following is a 218-amino-acid chain: MKFFLDTASVSEIKRISELGLVDGVTTNPTIIAKEGRPFEEVIKEICSIVDGPVSAEVIGLEADKMVEEARILAKWAPNVVVKIPMTEEGLKAVHTLTAEGIKTNVTLIFTVSQGLMAAKAGATYISPFLGRLDDIGTDGMILIKNLKKVLDNYGLKAEIISASIRHIGHLEEAAEAGAHIATIPGSLFPKLWSHPLTDKGIEGFLKDWEAFSQKEGN.

The active-site Schiff-base intermediate with substrate is the Lys-83.

Belongs to the transaldolase family. Type 3B subfamily.

The protein localises to the cytoplasm. It carries out the reaction D-sedoheptulose 7-phosphate + D-glyceraldehyde 3-phosphate = D-erythrose 4-phosphate + beta-D-fructose 6-phosphate. Its pathway is carbohydrate degradation; pentose phosphate pathway; D-glyceraldehyde 3-phosphate and beta-D-fructose 6-phosphate from D-ribose 5-phosphate and D-xylulose 5-phosphate (non-oxidative stage): step 2/3. Its function is as follows. Transaldolase is important for the balance of metabolites in the pentose-phosphate pathway. The sequence is that of Probable transaldolase 2 from Listeria innocua serovar 6a (strain ATCC BAA-680 / CLIP 11262).